Consider the following 191-residue polypeptide: Cell division protein SepF (191 aa).

Residues 150 to 164 (TSSSPEEASPSSVST) are compositionally biased toward low complexity. Residues 150-191 (TSSSPEEASPSSVSTENTPQYSLGKNTTPEPAWGNSKLSAYS) form a disordered region. The segment covering 165–178 (ENTPQYSLGKNTTP) has biased composition (polar residues).

The protein belongs to the SepF family. As to quaternary structure, homodimer. Interacts with FtsZ.

It is found in the cytoplasm. In terms of biological role, cell division protein that is part of the divisome complex and is recruited early to the Z-ring. Probably stimulates Z-ring formation, perhaps through the cross-linking of FtsZ protofilaments. Its function overlaps with FtsA. In Prochlorococcus marinus (strain AS9601), this protein is Cell division protein SepF.